The following is a 121-amino-acid chain: MAMNLLNTASIAKEMQTKVTERMGDWFEAEFKAKANSASRRTRLIRSHGHTYTYARYQNTGQLSSNLKQVKKGDKIVVNAGTRANYTSGYHGMYFLVEKKGMQDVKTTLKKGANYANSMKL.

Belongs to the Skunalikevirus tail terminator protein family. Homohexamer. Interacts with the tail tube protein.

It is found in the virion. Its function is as follows. Plays an essential role in tail assembly by capping the rapidly polymerizing tail once it has reached its requisite length and serving as the interaction surface for the connector and the tail tube proteins. The chain is Probable tail terminator protein from Lactococcus phage SK1 (Lactococcus lactis bacteriophage SK1).